Here is a 288-residue protein sequence, read N- to C-terminus: ATP synthase gamma chain (288 aa).

The protein belongs to the ATPase gamma chain family. F-type ATPases have 2 components, CF(1) - the catalytic core - and CF(0) - the membrane proton channel. CF(1) has five subunits: alpha(3), beta(3), gamma(1), delta(1), epsilon(1). CF(0) has three main subunits: a, b and c.

The protein localises to the cell inner membrane. Functionally, produces ATP from ADP in the presence of a proton gradient across the membrane. The gamma chain is believed to be important in regulating ATPase activity and the flow of protons through the CF(0) complex. The sequence is that of ATP synthase gamma chain from Rickettsia felis (strain ATCC VR-1525 / URRWXCal2) (Rickettsia azadi).